Reading from the N-terminus, the 254-residue chain is K88 minor fimbrial subunit FaeI (254 aa).

The signal sequence occupies residues 1 to 20 (MKKVTLFLFVVSLLPSTVLA).

It belongs to the fimbrial K88 protein family.

The protein localises to the fimbrium. Functionally, K88 minor fimbrial subunit, plays an essential role in the biogenesis of the K88 fimbriae. Fimbriae (also called pili), are polar filaments radiating from the surface of the bacterium to a length of 0.5-1.5 micrometers and numbering 100-300 per cell. They enable bacteria to colonize the epithelium of specific host organs. The sequence is that of K88 minor fimbrial subunit FaeI (faeI) from Escherichia coli.